Reading from the N-terminus, the 973-residue chain is NLR family member X1 (973 aa).

Residues 1 to 84 (MRWGCHLPRT…EAIQRHRRNL (84 aa)) constitute a mitochondrion transit peptide. Residues 73-554 (ATEAIQRHRR…RILPLLFNLL (482 aa)) form a required for interaction with MAVS region. In terms of domain architecture, NACHT spans 158-481 (QTVVLYGTVG…LRFFLAPCVE (324 aa)). 164-171 (GTVGTGKS) is a binding site for ATP. Positions 554–972 (LKVVPRVFGR…TLLEQLGGSG (419 aa)) are required for the repression of MAVS-induced interferon signaling. Residues 665–692 (RQVLPPSELLDHLFFHYEFQNQRFSAEV) enclose the LRRNT domain. LRR repeat units follow at residues 693–716 (LGSL…VVAS), 722–745 (RHPL…TLMP), 747–775 (LLRA…LLHD), 776–799 (QCQI…VLMD), 809–832 (HLSL…LDRN), 833–855 (KQLQ…ALAK), 856–875 (AARK…ELSS), and 876–897 (EGRQ…VVAS). Residues 904–968 (VSEYWSVILS…SEVKTLLEQL (65 aa)) form the LRRCT domain.

Belongs to the NLRP family. In terms of assembly, homohexamer. Interacts with MAVS. Interacts with TUFM.

It localises to the mitochondrion outer membrane. Functionally, participates in antiviral signaling. Acts as a negative regulator of MAVS-mediated antiviral responses, through the inhibition of the virus-induced RLH (RIG-like helicase)-MAVS interaction. Instead, promotes autophagy by interacting with TUFM and subsequently recruiting the autophagy-related proteins ATG5 and ATG12. Also regulates MAVS-dependent NLRP3 inflammasome activation to attenuate apoptosis. Has no inhibitory function on NF-kappa-B signaling pathway, but enhances NF-kappa-B and JUN N-terminal kinase dependent signaling through the production of reactive oxygen species. Regulates viral mediated-inflammation and energy metabolism in a sex-dependent manner. In females, prevents uncontrolled inflammation and energy metabolism and thus, may contribute to the sex differences observed in infectious and inflammatory diseases. The protein is NLR family member X1 (Nlrx1) of Rattus norvegicus (Rat).